A 71-amino-acid chain; its full sequence is uncharacterized protein (71 aa).

Residues 12–32 traverse the membrane as a helical segment; sequence FLVSIAFFGLAPTIPLLAIAL.

It is found in the membrane. This is an uncharacterized protein from Sinorhizobium fredii (strain NBRC 101917 / NGR234).